The primary structure comprises 156 residues: Small ribosomal subunit protein uS7 (156 aa).

The protein belongs to the universal ribosomal protein uS7 family. As to quaternary structure, part of the 30S ribosomal subunit. Contacts proteins S9 and S11.

In terms of biological role, one of the primary rRNA binding proteins, it binds directly to 16S rRNA where it nucleates assembly of the head domain of the 30S subunit. Is located at the subunit interface close to the decoding center, probably blocks exit of the E-site tRNA. The chain is Small ribosomal subunit protein uS7 from Lactobacillus acidophilus (strain ATCC 700396 / NCK56 / N2 / NCFM).